Here is a 125-residue protein sequence, read N- to C-terminus: MRHYEIVFMVHPDQSEQVPGMIERYTGSVKEAGGQVHRLEDWGRRQLAYPINKLHKAHYVLMNVEAPQQVIDELETTFRYNDAVLRSLVIHTKHAVTEASPMKAAKEERKPLAEVENNDFEDAEE.

The tract at residues 96–125 is disordered; it reads VTEASPMKAAKEERKPLAEVENNDFEDAEE. A compositionally biased stretch (basic and acidic residues) spans 104 to 113; sequence AAKEERKPLA. Acidic residues predominate over residues 116-125; it reads ENNDFEDAEE.

It belongs to the bacterial ribosomal protein bS6 family.

Functionally, binds together with bS18 to 16S ribosomal RNA. This Haemophilus influenzae (strain 86-028NP) protein is Small ribosomal subunit protein bS6.